Here is a 605-residue protein sequence, read N- to C-terminus: Alanine--tRNA ligase (605 aa).

Zn(2+)-binding residues include histidine 463, histidine 467, cysteine 565, and histidine 569.

This sequence belongs to the class-II aminoacyl-tRNA synthetase family. The cofactor is Zn(2+).

The protein localises to the cytoplasm. The catalysed reaction is tRNA(Ala) + L-alanine + ATP = L-alanyl-tRNA(Ala) + AMP + diphosphate. In terms of biological role, catalyzes the attachment of alanine to tRNA(Ala) in a two-step reaction: alanine is first activated by ATP to form Ala-AMP and then transferred to the acceptor end of tRNA(Ala). Also edits incorrectly charged Ser-tRNA(Ala) and Gly-tRNA(Ala) via its editing domain. This is Alanine--tRNA ligase (alaS) from Treponema pallidum (strain Nichols).